The sequence spans 507 residues: ATP synthase subunit alpha, chloroplastic (507 aa).

Gly170–Thr177 serves as a coordination point for ATP.

This sequence belongs to the ATPase alpha/beta chains family. F-type ATPases have 2 components, CF(1) - the catalytic core - and CF(0) - the membrane proton channel. CF(1) has five subunits: alpha(3), beta(3), gamma(1), delta(1), epsilon(1). CF(0) has four main subunits: a, b, b' and c.

The protein resides in the plastid. The protein localises to the chloroplast thylakoid membrane. The enzyme catalyses ATP + H2O + 4 H(+)(in) = ADP + phosphate + 5 H(+)(out). In terms of biological role, produces ATP from ADP in the presence of a proton gradient across the membrane. The alpha chain is a regulatory subunit. This Drimys granadensis protein is ATP synthase subunit alpha, chloroplastic.